Reading from the N-terminus, the 291-residue chain is N-acetylmannosamine kinase (291 aa).

ATP is bound by residues 5 to 12 (AIDIGGTK) and 132 to 139 (GVGGGVVC). The Zn(2+) site is built by H156, C166, C168, and C173.

This sequence belongs to the ROK (NagC/XylR) family. NanK subfamily. In terms of assembly, homodimer.

The catalysed reaction is an N-acyl-D-mannosamine + ATP = an N-acyl-D-mannosamine 6-phosphate + ADP + H(+). Its pathway is amino-sugar metabolism; N-acetylneuraminate degradation; D-fructose 6-phosphate from N-acetylneuraminate: step 2/5. In terms of biological role, catalyzes the phosphorylation of N-acetylmannosamine (ManNAc) to ManNAc-6-P. In Salmonella agona (strain SL483), this protein is N-acetylmannosamine kinase.